Reading from the N-terminus, the 468-residue chain is Chromatin assembly factor 1 subunit B (468 aa).

5 WD repeats span residues 11–52 (HDSQ…NGQN), 69–108 (HHEQ…TQQE), 143–182 (TAAA…LVCG), 185–224 (DHGH…AGVV), and 371–413 (IHYS…SRIE).

Belongs to the WD repeat HIR1 family. In terms of assembly, component of chromatin assembly factor 1 (CAF-1), composed of MSI1/p50, CAC2/p60 and CAC1/p90. Interacts with RTT106.

The protein localises to the nucleus. Its function is as follows. Acts as a component of the histone chaperone complex chromatin assembly factor 1 (CAF-1), which assembles histone octamers onto replicating DNA. It performs the first step of the nucleosome assembly process, bringing newly synthesized histones H3 and H4 to replicating DNA; histones H2A/H2B can bind to this chromatin precursor subsequent to DNA replication to complete the histone octamer. Plays a role in the maintenance of heterochromatin. The polypeptide is Chromatin assembly factor 1 subunit B (CAC2) (Saccharomyces cerevisiae (strain ATCC 204508 / S288c) (Baker's yeast)).